The sequence spans 191 residues: Leucyl/phenylalanyl-tRNA--protein transferase (191 aa).

It belongs to the L/F-transferase family.

The protein resides in the cytoplasm. It catalyses the reaction N-terminal L-lysyl-[protein] + L-leucyl-tRNA(Leu) = N-terminal L-leucyl-L-lysyl-[protein] + tRNA(Leu) + H(+). The enzyme catalyses N-terminal L-arginyl-[protein] + L-leucyl-tRNA(Leu) = N-terminal L-leucyl-L-arginyl-[protein] + tRNA(Leu) + H(+). The catalysed reaction is L-phenylalanyl-tRNA(Phe) + an N-terminal L-alpha-aminoacyl-[protein] = an N-terminal L-phenylalanyl-L-alpha-aminoacyl-[protein] + tRNA(Phe). Functionally, functions in the N-end rule pathway of protein degradation where it conjugates Leu, Phe and, less efficiently, Met from aminoacyl-tRNAs to the N-termini of proteins containing an N-terminal arginine or lysine. The polypeptide is Leucyl/phenylalanyl-tRNA--protein transferase (Nostoc punctiforme (strain ATCC 29133 / PCC 73102)).